The following is a 111-amino-acid chain: MKKVIHIGLPELSEEELIRVGEIGQKIIINYIFDHLAKSEVRDLEVTARINRGETLDLELEVYVEVPIFVKVDVESLIEEALDKAYEAIEDYLRRISNERGEKAQRTSEEP.

It belongs to the UPF0440 family.

This is an uncharacterized protein from Pyrococcus furiosus (strain ATCC 43587 / DSM 3638 / JCM 8422 / Vc1).